The primary structure comprises 302 residues: MDPLLLGSVGVLVLAVTLIIWRLLKLQWDEKAARQRTDMLLAMNEGAGGSDERRGANVAGGMRRNARRRVNRDEQEDGFVNHMMNDGEDVEDLDGGAEQFEYDEDGKKIGKRKAAKLQAKEEKRQMREYEVREREERKRREEEREKKRDEERAKEEADEKAEEERLRKEREEKERKEHEEYLAMKASFAIEEEGTDAIEGEEAENLIRDFVDYVKTNKVVNIDELSSHFGLKSEDAVNRLQHFIEEGLVQGVMDDRGKFIYISDEEFAAVAKFINQRGRVSIHEIAEQSNRLIRLETPSAAE.

Residues 1–21 (MDPLLLGSVGVLVLAVTLIIW) traverse the membrane as a helical segment. Residues 22 to 302 (RLLKLQWDEK…IRLETPSAAE (281 aa)) are Cytoplasmic-facing. The segment at 101–178 (EYDEDGKKIG…EREEKERKEH (78 aa)) is disordered. Over residues 118 to 178 (QAKEEKRQMR…EREEKERKEH (61 aa)) the composition is skewed to basic and acidic residues.

Belongs to the DDRGK1 family.

It localises to the endoplasmic reticulum membrane. Functionally, substrate adapter for ufmylation, the covalent attachment of the ubiquitin-like modifier ufm-1 to substrate proteins. The polypeptide is DDRGK domain-containing protein 1 (Caenorhabditis elegans).